The sequence spans 286 residues: Homeobox-leucine zipper protein ATHB-20 (286 aa).

Positions 84–143 form a DNA-binding region, homeobox; sequence LGEKKKRLQLEQVKALEKSFELGNKLEPERKIQLAKALGMQPRQIAIWFQNRRARWKTRQ. Residues 144–179 form a leucine-zipper region; it reads LERDYDSLKKQFESLKSDNASLLAYNKKLLAEVMAL.

This sequence belongs to the HD-ZIP homeobox family. Class I subfamily. Widely expressed.

The protein localises to the nucleus. Its function is as follows. Probable transcription factor. The sequence is that of Homeobox-leucine zipper protein ATHB-20 (ATHB-20) from Arabidopsis thaliana (Mouse-ear cress).